A 454-amino-acid polypeptide reads, in one-letter code: Protection of telomeres protein 1b (454 aa).

It belongs to the telombin family. Interacts with TRB1, TRB2 and TRB3. In terms of tissue distribution, expressed at low levels in roots, rosette leaves, cauline leaves, stems and flowers.

Its subcellular location is the nucleus. It is found in the chromosome. The protein resides in the telomere. Negatively regulates telomerase activity and participates in chromosome end protection. Binds RNA non-specifically. Associates with a regulatory Pol III-dependent lncRNA, which represses telomerase activity in response to DNA damage. Binds single-stranded telomeric DNA with weak affinity. The sequence is that of Protection of telomeres protein 1b from Arabidopsis thaliana (Mouse-ear cress).